The sequence spans 335 residues: Phosphate acyltransferase (335 aa).

This sequence belongs to the PlsX family. Homodimer. Probably interacts with PlsY.

The protein localises to the cytoplasm. It carries out the reaction a fatty acyl-[ACP] + phosphate = an acyl phosphate + holo-[ACP]. It participates in lipid metabolism; phospholipid metabolism. Functionally, catalyzes the reversible formation of acyl-phosphate (acyl-PO(4)) from acyl-[acyl-carrier-protein] (acyl-ACP). This enzyme utilizes acyl-ACP as fatty acyl donor, but not acyl-CoA. The chain is Phosphate acyltransferase from Streptococcus equi subsp. zooepidemicus (strain MGCS10565).